The following is a 441-amino-acid chain: Methionine gamma-lyase (441 aa).

The disordered stretch occupies residues 1–25; sequence MAHFLETQEPLVFSGKKRNDRDDED. Lys248 carries the N6-(pyridoxal phosphate)lysine modification.

The protein belongs to the trans-sulfuration enzymes family. In terms of assembly, homotetramer. It depends on pyridoxal 5'-phosphate as a cofactor. As to expression, expressed in roots, stems, siliques, leaves, flowers and seeds after imbibition (at protein level). Transcripts accumulate in dry mature seeds, but at protein level, only present upon imbibition.

It localises to the cytoplasm. The catalysed reaction is L-methionine + H2O = methanethiol + 2-oxobutanoate + NH4(+). Functionally, catalyzes the degradation of L-methionine to alpha-ketobutyrate, methanethiol and ammonia. Exhibits a high activity toward L-methionine, L-ethionine, L-homocysteine and seleno-L-methionine, but not L-cysteine. Involved in an alternative cysteine biosynthesis pathway to the reverse trans-sulfuration pathway (methionine-&gt;homocysteine-&gt;cystathionine-&gt;cysteine) in which methanethiol is an intermediate. Also mediates an alternative isoleucine biosynthesis pathway in which 2-ketobutyrate is an intermediate. The chain is Methionine gamma-lyase (MGL) from Arabidopsis thaliana (Mouse-ear cress).